Here is a 1149-residue protein sequence, read N- to C-terminus: ATP-dependent helicase/deoxyribonuclease subunit B (1149 aa).

Residue 8 to 15 coordinates ATP; the sequence is GRAGTGKT. The [4Fe-4S] cluster site is built by Cys784, Cys1102, Cys1105, and Cys1111.

Belongs to the helicase family. AddB/RexB type 1 subfamily. As to quaternary structure, heterodimer of AddA and AddB. It depends on Mg(2+) as a cofactor. The cofactor is [4Fe-4S] cluster.

Functionally, the heterodimer acts as both an ATP-dependent DNA helicase and an ATP-dependent, dual-direction single-stranded exonuclease. Recognizes the chi site generating a DNA molecule suitable for the initiation of homologous recombination. The AddB subunit has 5' -&gt; 3' nuclease activity but not helicase activity. The protein is ATP-dependent helicase/deoxyribonuclease subunit B of Thermoanaerobacter pseudethanolicus (strain ATCC 33223 / 39E) (Clostridium thermohydrosulfuricum).